The primary structure comprises 30 residues: Ampulexin 3 (30 aa).

The first 17 residues, Met1 to Gly17, serve as a signal peptide directing secretion.

As to quaternary structure, monomer. As to expression, expressed in venom sac and, to a lesser extent, in venom gland. Not expressed in brain.

It is found in the secreted. This Ampulex compressa (Emerald cockroach wasp) protein is Ampulexin 3.